The chain runs to 236 residues: Phosphoribosylaminoimidazole-succinocarboxamide synthase (236 aa).

The protein belongs to the SAICAR synthetase family.

The catalysed reaction is 5-amino-1-(5-phospho-D-ribosyl)imidazole-4-carboxylate + L-aspartate + ATP = (2S)-2-[5-amino-1-(5-phospho-beta-D-ribosyl)imidazole-4-carboxamido]succinate + ADP + phosphate + 2 H(+). It participates in purine metabolism; IMP biosynthesis via de novo pathway; 5-amino-1-(5-phospho-D-ribosyl)imidazole-4-carboxamide from 5-amino-1-(5-phospho-D-ribosyl)imidazole-4-carboxylate: step 1/2. The chain is Phosphoribosylaminoimidazole-succinocarboxamide synthase from Pseudomonas putida (strain W619).